The chain runs to 942 residues: Calcium-activated chloride channel regulator 2 (942 aa).

A signal peptide spans 1–32; that stretch reads MTHRDSTGPVIGLKLVTLLFTLSPELLFLGAG. Residues 33-905 lie on the Extracellular side of the membrane; the sequence is LKLKENGYDG…SRDDLILKGV (873 aa). Residues 54–205 form a metalloprotease domain region; sequence DLKLITNIKE…CSSDITGVFV (152 aa). Residues N74 and N97 are each glycosylated (N-linked (GlcNAc...) asparagine). H164 serves as a coordination point for Zn(2+). E165 is a catalytic residue. H168 and D175 together coordinate Zn(2+). N-linked (GlcNAc...) asparagine glycosylation is found at N231, N235, N254, and N286. Positions 311–483 constitute a VWFA domain; the sequence is VVCLVIDVSR…NGMTEAFVRI (173 aa). N-linked (GlcNAc...) asparagine glycans are attached at residues N522, N580, N637, and N821. The chain crosses the membrane as a helical span at residues 906–926; it reads LTTVGLIAILCLIMVVAHCIF. Residues 927–942 lie on the Cytoplasmic side of the membrane; the sequence is NRKKRPSRKENETKFL.

It belongs to the CLCR family. The translation product is autoproteolytically cleaved by the metalloprotease domain in the endoplasmic reticulum into a N-terminal and a C-terminal products that remain physically associated with each other. The cleavage is necessary for calcium-activated chloride channel (CaCC) activation activity. Post-translationally, N-glycosylated. As to expression, highly expressed in eye, spleen, lung, kidney, uterus, and endothelial cells. Weakly expressed in heart and throughout the gastrointestinal tract. Highly expressed in mammary cell lines. Its expression in immortalized cell line HC11 correlates with slow or arrested growth. Re-expression in mammary tumor cells reduces colony survival.

It localises to the cell membrane. Its subcellular location is the basal cell membrane. The protein localises to the cell junction. Its function is as follows. Plays a role in modulating chloride current across the plasma membrane in a calcium-dependent manner, and cell adhesion. Involved in basal cell adhesion and/or stratification of squamous epithelia. May act as a tumor suppressor in breast and colorectal cancer. Plays a key role for cell adhesion in the beginning stages of lung metastasis via the binding to ITGB4. This Mus musculus (Mouse) protein is Calcium-activated chloride channel regulator 2 (Clca2).